The sequence spans 220 residues: Large ribosomal subunit protein uL16 (220 aa).

It belongs to the universal ribosomal protein uL16 family. In terms of assembly, component of the small ribosomal subunit. Mature ribosomes consist of a small (40S) and a large (60S) subunit. The 40S subunit contains about 33 different proteins and 1 molecule of RNA (18S). The 60S subunit contains about 49 different proteins and 3 molecules of RNA (25S, 5.8S and 5S).

In Zea mays (Maize), this protein is Large ribosomal subunit protein uL16 (RPL10).